The sequence spans 122 residues: Large ribosomal subunit protein uL14 (122 aa).

Belongs to the universal ribosomal protein uL14 family. Part of the 50S ribosomal subunit. Forms a cluster with proteins L3 and L19. In the 70S ribosome, L14 and L19 interact and together make contacts with the 16S rRNA in bridges B5 and B8.

In terms of biological role, binds to 23S rRNA. Forms part of two intersubunit bridges in the 70S ribosome. This Rhizobium meliloti (strain 1021) (Ensifer meliloti) protein is Large ribosomal subunit protein uL14.